A 350-amino-acid polypeptide reads, in one-letter code: Holliday junction branch migration complex subunit RuvB (350 aa).

A large ATPase domain (RuvB-L) region spans residues 1 to 183; it reads MSAERLVNPH…FVAVHRLVFY (183 aa). Residues leucine 22, arginine 23, glycine 64, lysine 67, threonine 68, serine 69, 130-132, arginine 173, tyrosine 183, and arginine 220 contribute to the ATP site; that span reads EDF. Residue threonine 68 participates in Mg(2+) binding. The segment at 184–254 is small ATPAse domain (RuvB-S); sequence SDAAMTEIVS…VAREALAQLE (71 aa). A head domain (RuvB-H) region spans residues 257 to 350; it reads ELGLDENDRR…ESGPQQGTLF (94 aa). Arginine 312 and arginine 317 together coordinate DNA.

Belongs to the RuvB family. Homohexamer. Forms an RuvA(8)-RuvB(12)-Holliday junction (HJ) complex. HJ DNA is sandwiched between 2 RuvA tetramers; dsDNA enters through RuvA and exits via RuvB. An RuvB hexamer assembles on each DNA strand where it exits the tetramer. Each RuvB hexamer is contacted by two RuvA subunits (via domain III) on 2 adjacent RuvB subunits; this complex drives branch migration. In the full resolvosome a probable DNA-RuvA(4)-RuvB(12)-RuvC(2) complex forms which resolves the HJ.

Its subcellular location is the cytoplasm. The enzyme catalyses ATP + H2O = ADP + phosphate + H(+). In terms of biological role, the RuvA-RuvB-RuvC complex processes Holliday junction (HJ) DNA during genetic recombination and DNA repair, while the RuvA-RuvB complex plays an important role in the rescue of blocked DNA replication forks via replication fork reversal (RFR). RuvA specifically binds to HJ cruciform DNA, conferring on it an open structure. The RuvB hexamer acts as an ATP-dependent pump, pulling dsDNA into and through the RuvAB complex. RuvB forms 2 homohexamers on either side of HJ DNA bound by 1 or 2 RuvA tetramers; 4 subunits per hexamer contact DNA at a time. Coordinated motions by a converter formed by DNA-disengaged RuvB subunits stimulates ATP hydrolysis and nucleotide exchange. Immobilization of the converter enables RuvB to convert the ATP-contained energy into a lever motion, pulling 2 nucleotides of DNA out of the RuvA tetramer per ATP hydrolyzed, thus driving DNA branch migration. The RuvB motors rotate together with the DNA substrate, which together with the progressing nucleotide cycle form the mechanistic basis for DNA recombination by continuous HJ branch migration. Branch migration allows RuvC to scan DNA until it finds its consensus sequence, where it cleaves and resolves cruciform DNA. The protein is Holliday junction branch migration complex subunit RuvB of Chloroflexus aggregans (strain MD-66 / DSM 9485).